Here is a 179-residue protein sequence, read N- to C-terminus: MNRLQEKYKSDIVKAMMDKFNYDSVMQVPKIEKIVINMGVGDAVSNSKALDMAVEELTILSGQKPLVTKAKKSIAGFKLREGMPIGAKVTLRGERMYDFLDKLVTVSLPRVRDFRGVSKKAFDGRGNYTLGVKEQLIFPEIDYDKVSKVRGMDIVVVTTANTDEEARELLTLLGMPFQK.

Belongs to the universal ribosomal protein uL5 family. In terms of assembly, part of the 50S ribosomal subunit; part of the 5S rRNA/L5/L18/L25 subcomplex. Contacts the 5S rRNA and the P site tRNA. Forms a bridge to the 30S subunit in the 70S ribosome.

In terms of biological role, this is one of the proteins that bind and probably mediate the attachment of the 5S RNA into the large ribosomal subunit, where it forms part of the central protuberance. In the 70S ribosome it contacts protein S13 of the 30S subunit (bridge B1b), connecting the 2 subunits; this bridge is implicated in subunit movement. Contacts the P site tRNA; the 5S rRNA and some of its associated proteins might help stabilize positioning of ribosome-bound tRNAs. The sequence is that of Large ribosomal subunit protein uL5 from Exiguobacterium sp. (strain ATCC BAA-1283 / AT1b).